We begin with the raw amino-acid sequence, 468 residues long: MPEGEGGDCGEVPALVPDGEPLREEQRPLKQSLGGSLCRESHWKCLLLTLLIHACGAVVAWCRLATVPRLVLGPEAALARGAGGPPPTYPASPCSDGYLYIPLAFVSLLYLLYLAECWHCHVRSCQAPRTDANTVLALIHRLQQAPPCVWWKATSYHYVRRTRQITRYRNGDAYTTTQVYHERADSRTARGEFDYSAHGVRDVSKELVGLADHAATRLRFTKCFSFGSAEAEASYLTQRARFFSANEGLDDYLEAREGMHLKDVDFRESLMVFADPRSPPWYARAWVFWLVSAATLSWPLRVVAAYGTAHVHYQVEKLFGASSPPPGAVPSGPPLSRVATVDFTELEWHICSNRQLVPSYSEAVVMGASSGAYLRGCQRCRRSVSSNSLPPARPSGPRLPFSRSRLSLGAGGRTTPGVFRSLSGGPLGRRGEDTEPLESPPCYEDALYFPVLIVHGDSGCRGDGQGAL.

A disordered region spans residues 1 to 20 (MPEGEGGDCGEVPALVPDGE). The next 2 membrane-spanning stretches (helical) occupy residues 45–65 (CLLL…CRLA) and 98–118 (YLYI…AECW). The interval 384–438 (VSSNSLPPARPSGPRLPFSRSRLSLGAGGRTTPGVFRSLSGGPLGRRGEDTEPLE) is disordered.

Belongs to the TMEM151 family. As to expression, highly expressed in the central nervous system (CNS) including the cerebral cortex, hippocampus, spinal cord, brainstem, and thalamus. Expression is relatively low during postnatal stages but highly expressed at postnatal day 14 (P14), and declined in adulthood. Also expressed in the stomach, heart, liver, spleen, lung, kidney, and muscle.

It localises to the endoplasmic reticulum membrane. The protein localises to the cell projection. It is found in the axon. The protein resides in the dendrite. This Mus musculus (Mouse) protein is Transmembrane protein 151A (Tmem151a).